Reading from the N-terminus, the 500-residue chain is Inner membrane transporter YjeM (500 aa).

Over 1 to 7 (MPHTIKK) the chain is Cytoplasmic. Residues 8–28 (MSLIGLILMIFTSVFGFANSP) form a helical membrane-spanning segment. The Periplasmic portion of the chain corresponds to 29–37 (SAYYLMGYS). The chain crosses the membrane as a helical span at residues 38-58 (AIPFYIFSALLFFIPFALMMA). The Cytoplasmic segment spans residues 59–82 (EMGAAYRKEEGGIYSWMNNSVGPR). Residues 83 to 103 (FAFIGTFMWFSSYIIWMVSTS) form a helical membrane-spanning segment. The Periplasmic segment spans residues 104-132 (AKVWVPFSTFLYGSDMTQHWRIAGLEPTQ). A helical transmembrane segment spans residues 133 to 153 (VVGLLAVAWMILVTVVASKGI). Residues 154–163 (NKIARITAVG) lie on the Cytoplasmic side of the membrane. A helical membrane pass occupies residues 164–184 (GIAVMCLNLVLLLVSITILLL). The Periplasmic portion of the chain corresponds to 185–209 (NGGHFAQDINFLASPNPGYQSGLAM). A helical membrane pass occupies residues 210–230 (LSFVVFAIFAYGGIEAVGGLV). At 231 to 243 (DKTENPEKNFAKG) the chain is on the cytoplasmic side. The chain crosses the membrane as a helical span at residues 244-264 (IVFAAIVISIGYSLAIFLWGV). Topologically, residues 265 to 319 (STNWQQVLSNGSVNLGNITYVLMKSLGMTLGNALHLSPEASLSLGVWFARITGLS) are periplasmic. The helical transmembrane segment at 320–340 (MFLAYTGAFFTLCYSPLKAII) threads the bilayer. The Cytoplasmic portion of the chain corresponds to 341 to 369 (QGTPKALWPEPMTRLNAMGMPSIAMWMQC). The chain crosses the membrane as a helical span at residues 370–390 (GLVTVFILLVSFGGGTASAFF). Residues 391-394 (NKLT) are Periplasmic-facing. Residues 395 to 415 (LMANVSMTLPYLFLALAFPFF) form a helical membrane-spanning segment. The Cytoplasmic portion of the chain corresponds to 416–433 (KARQDLDRPFVIFKTHLS). A helical transmembrane segment spans residues 434–454 (AMIATVVVVLVVTFANVFTII). At 455 to 462 (QPVVEAGD) the chain is on the periplasmic side. Residues 463–483 (WDSTLWMIGGPVFFSLLAMAI) form a helical membrane-spanning segment. The Cytoplasmic portion of the chain corresponds to 484-500 (YQNYCSRVAKNPQWAVE).

Belongs to the amino acid-polyamine-organocation (APC) superfamily.

Its subcellular location is the cell inner membrane. This Escherichia coli (strain K12) protein is Inner membrane transporter YjeM (yjeM).